The sequence spans 177 residues: Inorganic pyrophosphatase (177 aa).

3 residues coordinate substrate: K34, R48, and Y60. Residues D70, D75, and D107 each contribute to the Mg(2+) site. Y144 is a substrate binding site.

It belongs to the PPase family. As to quaternary structure, homohexamer. The cofactor is Mg(2+).

Its subcellular location is the cytoplasm. The enzyme catalyses diphosphate + H2O = 2 phosphate + H(+). In terms of biological role, catalyzes the hydrolysis of inorganic pyrophosphate (PPi) forming two phosphate ions. The chain is Inorganic pyrophosphatase from Picrophilus torridus (strain ATCC 700027 / DSM 9790 / JCM 10055 / NBRC 100828 / KAW 2/3).